A 341-amino-acid chain; its full sequence is Ferrochelatase (341 aa).

His-189 and Glu-293 together coordinate Fe cation.

The protein belongs to the ferrochelatase family.

It localises to the cytoplasm. It catalyses the reaction heme b + 2 H(+) = protoporphyrin IX + Fe(2+). The protein operates within porphyrin-containing compound metabolism; protoheme biosynthesis; protoheme from protoporphyrin-IX: step 1/1. Functionally, catalyzes the ferrous insertion into protoporphyrin IX. This is Ferrochelatase from Pseudomonas fluorescens (strain Pf0-1).